Reading from the N-terminus, the 419-residue chain is Light-independent protochlorophyllide reductase subunit N (419 aa).

Positions 17, 42, and 103 each coordinate [4Fe-4S] cluster.

The protein belongs to the BchN/ChlN family. In terms of assembly, protochlorophyllide reductase is composed of three subunits; ChlL, ChlN and ChlB. Forms a heterotetramer of two ChlB and two ChlN subunits. [4Fe-4S] cluster is required as a cofactor.

The catalysed reaction is chlorophyllide a + oxidized 2[4Fe-4S]-[ferredoxin] + 2 ADP + 2 phosphate = protochlorophyllide a + reduced 2[4Fe-4S]-[ferredoxin] + 2 ATP + 2 H2O. It functions in the pathway porphyrin-containing compound metabolism; chlorophyll biosynthesis (light-independent). In terms of biological role, component of the dark-operative protochlorophyllide reductase (DPOR) that uses Mg-ATP and reduced ferredoxin to reduce ring D of protochlorophyllide (Pchlide) to form chlorophyllide a (Chlide). This reaction is light-independent. The NB-protein (ChlN-ChlB) is the catalytic component of the complex. The chain is Light-independent protochlorophyllide reductase subunit N from Prochlorococcus marinus (strain NATL1A).